We begin with the raw amino-acid sequence, 125 residues long: Fluoride-specific ion channel FluC (125 aa).

A run of 4 helical transmembrane segments spans residues 3 to 23 (FILI…VSKV), 33 to 53 (IPLG…FVLF), 65 to 85 (FVLF…TFAY), and 99 to 119 (LVYF…GMVL). The Na(+) site is built by Gly-75 and Thr-78.

The protein belongs to the fluoride channel Fluc/FEX (TC 1.A.43) family.

The protein resides in the cell inner membrane. The catalysed reaction is fluoride(in) = fluoride(out). Na(+) is not transported, but it plays an essential structural role and its presence is essential for fluoride channel function. Functionally, fluoride-specific ion channel. Important for reducing fluoride concentration in the cell, thus reducing its toxicity. This Thermosipho melanesiensis (strain DSM 12029 / CIP 104789 / BI429) protein is Fluoride-specific ion channel FluC.